A 79-amino-acid chain; its full sequence is Acyl carrier protein (79 aa).

Residues 2 to 77 (SDIGERVKKI…DATKFLEKNA (76 aa)) form the Carrier domain. The residue at position 37 (serine 37) is an O-(pantetheine 4'-phosphoryl)serine.

Belongs to the acyl carrier protein (ACP) family. 4'-phosphopantetheine is transferred from CoA to a specific serine of apo-ACP by AcpS. This modification is essential for activity because fatty acids are bound in thioester linkage to the sulfhydryl of the prosthetic group.

It is found in the cytoplasm. It functions in the pathway lipid metabolism; fatty acid biosynthesis. Its function is as follows. Carrier of the growing fatty acid chain in fatty acid biosynthesis. This is Acyl carrier protein from Bradyrhizobium diazoefficiens (strain JCM 10833 / BCRC 13528 / IAM 13628 / NBRC 14792 / USDA 110).